The primary structure comprises 138 residues: ATP synthase epsilon chain (138 aa).

The protein belongs to the ATPase epsilon chain family. In terms of assembly, F-type ATPases have 2 components, CF(1) - the catalytic core - and CF(0) - the membrane proton channel. CF(1) has five subunits: alpha(3), beta(3), gamma(1), delta(1), epsilon(1). CF(0) has three main subunits: a, b and c.

Its subcellular location is the cell membrane. Its function is as follows. Produces ATP from ADP in the presence of a proton gradient across the membrane. The chain is ATP synthase epsilon chain from Streptococcus suis (strain 98HAH33).